The sequence spans 791 residues: GDH/6PGL endoplasmic bifunctional protein (791 aa).

The signal sequence occupies residues 1–19 (MWNMLIVAMCLALLGCLQA). Gln-20 is subject to Pyrrolidone carboxylic acid. A hexose-6-phosphate dehydrogenase region spans residues 20–526 (QELQGHVSII…SGRLFFSQQQ (507 aa)). NADP(+) is bound by residues 32–39 (GATGDLAK) and Tyr-149. A glycan (N-linked (GlcNAc...) asparagine) is linked at Asn-157. Position 174 (Lys-174) interacts with NADP(+). D-glucose 6-phosphate is bound by residues Lys-174, 204-208 (HYLGK), Glu-243, and Asp-262. An N6-succinyllysine modification is found at Lys-208. His-267 serves as the catalytic Proton acceptor. Residue Asn-282 is glycosylated (N-linked (GlcNAc...) asparagine). Residues Lys-360 and Arg-365 each coordinate D-glucose 6-phosphate. Arg-370 is an NADP(+) binding site. Residues 527–540 (PEQLVPGPGPAPMP) are linker. The segment at 541–791 (SDFQVLRAKY…WYMDYDAFLG (251 aa)) is 6-phosphogluconolactonase. Trp-617 lines the NADP(+) pocket. An N-linked (GlcNAc...) asparagine glycan is attached at Asn-683.

It in the N-terminal section; belongs to the glucose-6-phosphate dehydrogenase family. In the C-terminal section; belongs to the glucosamine/galactosamine-6-phosphate isomerase family. 6-phosphogluconolactonase subfamily. As to quaternary structure, homodimer. As to expression, present in most tissues examined, strongest in liver.

The protein resides in the endoplasmic reticulum lumen. It carries out the reaction D-glucose 6-phosphate + NADP(+) = 6-phospho-D-glucono-1,5-lactone + NADPH + H(+). It catalyses the reaction D-glucose 6-phosphate + NAD(+) = 6-phospho-D-glucono-1,5-lactone + NADH + H(+). The enzyme catalyses 6-phospho-D-glucono-1,5-lactone + H2O = 6-phospho-D-gluconate + H(+). The catalysed reaction is 2-deoxy-D-glucose 6-phosphate + NAD(+) = 2-deoxy-6-phospho-D-glucono-1,5-lactone + NADH + H(+). It carries out the reaction 2-deoxy-D-glucose 6-phosphate + NADP(+) = 2-deoxy-6-phospho-D-glucono-1,5-lactone + NADPH + H(+). It catalyses the reaction D-galactose 6-phosphate + NADP(+) = 6-phospho-D-galactono-1,5-lactone + NADPH + H(+). The enzyme catalyses D-galactose 6-phosphate + NAD(+) = 6-phospho-D-galactono-1,5-lactone + NADH + H(+). The catalysed reaction is D-glucosamine 6-phosphate + NADP(+) = 2-amino-2-deoxy-6-phospho-D-glucono-1,5-lactone + NADPH + 2 H(+). It carries out the reaction D-glucose + NAD(+) = D-glucono-1,5-lactone + NADH + H(+). It catalyses the reaction D-glucose + NADP(+) = D-glucono-1,5-lactone + NADPH + H(+). The enzyme catalyses D-glucose 6-sulfate + NADP(+) = 6-sulfo-D-glucono-1,5-lactone + NADPH + H(+). It functions in the pathway carbohydrate degradation; pentose phosphate pathway; D-ribulose 5-phosphate from D-glucose 6-phosphate (oxidative stage): step 1/3. Its pathway is carbohydrate degradation; pentose phosphate pathway; D-ribulose 5-phosphate from D-glucose 6-phosphate (oxidative stage): step 2/3. It participates in carbohydrate degradation; pentose phosphate pathway; D-ribulose 5-phosphate from D-glucose 6-phosphate (oxidative stage). Its function is as follows. Bifunctional enzyme localized in the lumen of the endoplasmic reticulum that catalyzes the first two steps of the oxidative branch of the pentose phosphate pathway/shunt, an alternative to glycolysis and a major source of reducing power and metabolic intermediates for biosynthetic processes. Has a hexose-6-phosphate dehydrogenase activity, with broad substrate specificity compared to glucose-6-phosphate 1-dehydrogenase/G6PD, and catalyzes the first step of the pentose phosphate pathway. In addition, acts as a 6-phosphogluconolactonase and catalyzes the second step of the pentose phosphate pathway. May have a dehydrogenase activity for alternative substrates including glucosamine 6-phosphate and glucose 6-sulfate. The main function of this enzyme is to provide reducing equivalents such as NADPH to maintain the adequate levels of reductive cofactors in the oxidizing environment of the endoplasmic reticulum. By producing NADPH that is needed by reductases of the lumen of the endoplasmic reticulum like corticosteroid 11-beta-dehydrogenase isozyme 1/HSD11B1, indirectly regulates their activity. The protein is GDH/6PGL endoplasmic bifunctional protein of Homo sapiens (Human).